The following is a 338-amino-acid chain: Secretion system apparatus protein SsaL (338 aa).

The sequence is that of Secretion system apparatus protein SsaL (ssaL) from Salmonella typhimurium (strain LT2 / SGSC1412 / ATCC 700720).